The sequence spans 458 residues: V-type ATP synthase beta chain (458 aa).

This sequence belongs to the ATPase alpha/beta chains family.

Functionally, produces ATP from ADP in the presence of a proton gradient across the membrane. The V-type beta chain is a regulatory subunit. The polypeptide is V-type ATP synthase beta chain (Enterococcus faecalis (strain ATCC 700802 / V583)).